An 877-amino-acid chain; its full sequence is Ewing's tumor-associated antigen 1 homolog (877 aa).

Residues 1–82 (MQLKDGGTGM…GRSPRGKETP (82 aa)) are disordered. Residues 56 to 65 (AGTRSARRAQ) are compositionally biased toward basic residues. Lys-87 participates in a covalent cross-link: Glycyl lysine isopeptide (Lys-Gly) (interchain with G-Cter in SUMO2). The ATR-activation domain (AAD) motif lies at 107 to 113 (IFWDQNS). Coiled-coil stretches lie at residues 185–213 (KTKN…IQEQ) and 306–335 (AFLN…LLTE). Residues Lys-416 and Lys-444 each participate in a glycyl lysine isopeptide (Lys-Gly) (interchain with G-Cter in SUMO2) cross-link. Residues 450–479 (PSKTRNGELRNAGEHRFSSHPGDESRKVPF) form a disordered region. Residues 454–476 (RNGELRNAGEHRFSSHPGDESRK) are compositionally biased toward basic and acidic residues. The residue at position 467 (Ser-467) is a Phosphoserine. Lys-510 is covalently cross-linked (Glycyl lysine isopeptide (Lys-Gly) (interchain with G-Cter in SUMO2)). The short motif at 607–622 (GEVDDDLFCQACDDIE) is the RBM1 motif element. 2 disordered regions span residues 626–664 (QQEN…PSKH) and 818–877 (ANQQ…ISLP). The segment covering 637–662 (SVSYTSTRGSRSSSTASKQASQSAPS) has biased composition (low complexity). Over residues 818–833 (ANQQQSSINYSESLKP) the composition is skewed to polar residues. The span at 840–859 (ERNRKYSPEEIQRKRQEALV) shows a compositional bias: basic and acidic residues. Residues 843-865 (RKYSPEEIQRKRQEALVRRKAKA) carry the RBM2 motif motif. A compositionally biased stretch (polar residues) spans 868 to 877 (TVQSAPISLP).

Interacts (via RBM1 motif) with RPA1. Interacts (via RBM2 motif) with RPA2. Interacts (via the ATR-activation domain motif) with ATR. In terms of processing, phosphorylated by ATR.

It is found in the nucleus. In terms of biological role, replication stress response protein that accumulates at DNA damage sites and promotes replication fork progression and integrity. Recruited to stalled replication forks via interaction with the RPA complex and directly stimulates ATR kinase activity independently of TOPBP1. Probably only regulates a subset of ATR targets. The protein is Ewing's tumor-associated antigen 1 homolog of Mus musculus (Mouse).